Here is a 649-residue protein sequence, read N- to C-terminus: Golgin subfamily A member 6-like protein 26 (649 aa).

Disordered stretches follow at residues 1–94 (MWPQ…HQEA), 300–330 (QEEK…RQEE), 358–440 (EKMH…EMWR), 455–572 (KEKM…REQE), and 584–620 (EQEE…MRRQ). Positions 10–23 (HPHLPTHPHLPTHP) are enriched in low complexity. Over residues 25–46 (MSKETRQSKLAEAKEQLTDHHP) the composition is skewed to basic and acidic residues. Composition is skewed to polar residues over residues 47-57 (QTNPSVGTAAS) and 65-77 (NNGT…TSGG). Residues 80–94 (SPEDEQKASHQHQEA) are compositionally biased toward basic and acidic residues. The stretch at 151 to 644 (LEQALSAVAT…EEKMQEHQEH (494 aa)) forms a coiled coil.

Belongs to the GOLGA6 family.

This Homo sapiens (Human) protein is Golgin subfamily A member 6-like protein 26 (GOLGA6L26).